The primary structure comprises 67 residues: Conotoxin TsMMSK-011 (67 aa).

Residues 1-20 form the signal peptide; sequence MMSKLGVLLTICLLLFPLTA. Positions 21–50 are excised as a propeptide; the sequence is VQLDGDQPADLPALRTQDISTDHSPWFDPV. Disulfide bonds link cysteine 53–cysteine 65, cysteine 54–cysteine 61, and cysteine 58–cysteine 64. Proline 63 carries the 4-hydroxyproline modification.

This sequence belongs to the conotoxin M superfamily. In terms of tissue distribution, expressed by the venom duct.

It is found in the secreted. This chain is Conotoxin TsMMSK-011, found in Conus tessulatus (Tessellate cone).